A 227-amino-acid polypeptide reads, in one-letter code: Probable maleylacetoacetate isomerase 2 (227 aa).

Residues 14 to 97 (IQPILYSYWR…YLEETRPQRP (84 aa)) enclose the GST N-terminal domain. Glutathione contacts are provided by residues 24–29 (SSCSWR), Gln-55, Val-69, 81–82 (ES), Gln-121, and 125–127 (NLI). Positions 102-222 (DVHKRAKVRE…HPSNQPDCPP (121 aa)) constitute a GST C-terminal domain.

It belongs to the GST superfamily. Zeta family. The cofactor is glutathione.

Its subcellular location is the cytoplasm. The enzyme catalyses 4-maleylacetoacetate = 4-fumarylacetoacetate. The catalysed reaction is RX + glutathione = an S-substituted glutathione + a halide anion + H(+). Its pathway is amino-acid degradation; L-phenylalanine degradation; acetoacetate and fumarate from L-phenylalanine: step 5/6. Catalyzes the glutathione dependent oxygenation of dichloroacetic acid to glyoxylic acid in vitro. Has no glutathione thioltransferase activity with 4-hydroxynonenal (4-HNE), adrenochrome, phenethyl isothiocyanate (PEITC), 5-hydroperoxyeicosatetraenoic acid ((5S)-HpETE), prostaglandin A2 (PGA2) or 2-hydroxyethyldisulfide (HED). This is Probable maleylacetoacetate isomerase 2 (GstZ2) from Drosophila melanogaster (Fruit fly).